A 300-amino-acid chain; its full sequence is Ubiquinone biosynthesis protein COQ4, mitochondrial (300 aa).

Zn(2+) is bound by residues H173, D174, H177, and E189.

The protein belongs to the COQ4 family. Component of a multi-subunit COQ enzyme complex, composed of at least COQ3, COQ4, COQ5, COQ6, COQ7 and COQ9. Zn(2+) is required as a cofactor.

Its subcellular location is the mitochondrion inner membrane. It catalyses the reaction a 4-hydroxy-3-methoxy-5-(all-trans-polyprenyl)benzoate + H(+) = a 2-methoxy-6-(all-trans-polyprenyl)phenol + CO2. It functions in the pathway cofactor biosynthesis; ubiquinone biosynthesis. Its function is as follows. Lyase that catalyzes the C1-decarboxylation of 4-hydroxy-3-methoxy-5-(all-trans-polyprenyl)benzoic acid into 2-methoxy-6-(all-trans-polyprenyl)phenol during ubiquinone biosynthesis. The protein is Ubiquinone biosynthesis protein COQ4, mitochondrial of Cryptococcus neoformans var. neoformans serotype D (strain B-3501A) (Filobasidiella neoformans).